Consider the following 493-residue polypeptide: Alpha-amylase-related protein (493 aa).

The N-terminal stretch at 1-19 (MFKFALTLTLCLAGSLSLA) is a signal peptide. Position 20 is a pyrrolidone carboxylic acid (glutamine 20). A disulfide bridge connects residues cysteine 47 and cysteine 103. Ca(2+)-binding residues include asparagine 117, glutamine 168, and aspartate 177. A disulfide bond links cysteine 156 and cysteine 170. Arginine 205 lines the chloride pocket. Residue aspartate 207 is the Nucleophile of the active site. Histidine 211 lines the Ca(2+) pocket. The active-site Proton donor is glutamate 244. Asparagine 307 and arginine 342 together coordinate chloride. Intrachain disulfides connect cysteine 375–cysteine 381, cysteine 417–cysteine 440, and cysteine 447–cysteine 459.

Belongs to the glycosyl hydrolase 13 family. Monomer. Ca(2+) serves as cofactor. Chloride is required as a cofactor.

The protein localises to the secreted. It catalyses the reaction Endohydrolysis of (1-&gt;4)-alpha-D-glucosidic linkages in polysaccharides containing three or more (1-&gt;4)-alpha-linked D-glucose units.. The sequence is that of Alpha-amylase-related protein (Amyrel) from Drosophila sechellia (Fruit fly).